The sequence spans 573 residues: 60 kDa heat shock protein, mitochondrial (573 aa).

Residues 1-26 (MLRLPTVLRQMRPVSRALAPHLTRAY) constitute a mitochondrion transit peptide. N6-succinyllysine is present on lysine 31. Phosphoserine is present on residues serine 67 and serine 70. Lysine 75 provides a ligand contact to ATP. The residue at position 75 (lysine 75) is an N6-acetyllysine. An N6-acetyllysine; alternate modification is found at lysine 82. N6-succinyllysine; alternate is present on lysine 82. An N6-acetyllysine modification is found at lysine 87. The residue at position 90 (tyrosine 90) is a Phosphotyrosine. The residue at position 91 (lysine 91) is an N6-acetyllysine. Position 111–115 (111–115 (DGTTT)) interacts with ATP. N6-acetyllysine; alternate is present on lysine 125. Lysine 125 carries the post-translational modification N6-succinyllysine; alternate. Lysine 130 is modified (N6-acetyllysine). Lysine 133 is subject to N6-acetyllysine; alternate. Position 133 is an N6-succinyllysine; alternate (lysine 133). Residue lysine 133 is modified to N6-malonyllysine; alternate. The residue at position 156 (lysine 156) is an N6-acetyllysine. 5 positions are modified to N6-acetyllysine; alternate: lysine 191, lysine 202, lysine 205, lysine 218, and lysine 236. An N6-succinyllysine; alternate mark is found at lysine 191, lysine 202, lysine 205, lysine 218, and lysine 236. N6-acetyllysine is present on lysine 249. An N6-acetyllysine; alternate modification is found at lysine 250. Residue lysine 250 is modified to N6-succinyllysine; alternate. Residues lysine 269 and lysine 292 each carry the N6-acetyllysine modification. Lysine 301 carries the post-translational modification N6-succinyllysine. Lysine 314 carries the post-translational modification N6-acetyllysine. Position 352 is an N6-acetyllysine; alternate (lysine 352). Lysine 352 is subject to N6-succinyllysine; alternate. An N6-acetyllysine mark is found at lysine 359 and lysine 389. Position 396 is an N6-acetyllysine; alternate (lysine 396). Residue lysine 396 is modified to N6-succinyllysine; alternate. Serine 410 bears the Phosphoserine mark. Glycine 440 contributes to the ATP binding site. Lysine 455 bears the N6-acetyllysine; alternate mark. Lysine 455 carries the post-translational modification N6-succinyllysine; alternate. Lysine 469 is subject to N6-acetyllysine. Lysine 481 carries the post-translational modification N6-acetyllysine; alternate. Position 481 is an N6-succinyllysine; alternate (lysine 481). Serine 488 carries the post-translational modification Phosphoserine. Aspartate 520 lines the ATP pocket. Lysine 551 is covalently cross-linked (Glycyl lysine isopeptide (Lys-Gly) (interchain with G-Cter in SUMO2)).

This sequence belongs to the chaperonin (HSP60) family. As to quaternary structure, homoheptamer arranged in a ring structure. The functional units of these chaperonins consist of heptameric rings of the large subunit Hsp60, which function as a back-to-back double ring. Interacts with 2 heptameric Hsp10 rings to form the symmetrical football complex. Interacts with HRAS. Interacts with ATAD3A. Interacts with ETFBKMT and EEF1AKMT3. Interacts with MFHAS1.

It localises to the mitochondrion matrix. It catalyses the reaction ATP + H2O + a folded polypeptide = ADP + phosphate + an unfolded polypeptide.. In terms of biological role, chaperonin implicated in mitochondrial protein import and macromolecular assembly. Together with Hsp10, facilitates the correct folding of imported proteins. May also prevent misfolding and promote the refolding and proper assembly of unfolded polypeptides generated under stress conditions in the mitochondrial matrix. The functional units of these chaperonins consist of heptameric rings of the large subunit Hsp60, which function as a back-to-back double ring. In a cyclic reaction, Hsp60 ring complexes bind one unfolded substrate protein per ring, followed by the binding of ATP and association with 2 heptameric rings of the co-chaperonin Hsp10. This leads to sequestration of the substrate protein in the inner cavity of Hsp60 where, for a certain period of time, it can fold undisturbed by other cell components. Synchronous hydrolysis of ATP in all Hsp60 subunits results in the dissociation of the chaperonin rings and the release of ADP and the folded substrate protein. This chain is 60 kDa heat shock protein, mitochondrial (HSPD1), found in Cricetulus griseus (Chinese hamster).